Reading from the N-terminus, the 641-residue chain is Epithelial sodium channel subunit beta (641 aa).

Topologically, residues 1-50 (MHVKKYLLKGLHRLQKGPGYTYKELLVWYCDNTNTHGPKRIICEGPKKKA) are cytoplasmic. Residues 51 to 71 (MWFVLTLLFTSLVCWQWGLFI) form a helical membrane-spanning segment. The Extracellular segment spans residues 72 to 533 (KTYLNWEVSV…GGQFGFWMGG (462 aa)). 9 disulfides stabilise this stretch: cysteine 98/cysteine 273, cysteine 185/cysteine 190, cysteine 197/cysteine 204, cysteine 250/cysteine 257, cysteine 362/cysteine 449, cysteine 387/cysteine 445, cysteine 391/cysteine 441, cysteine 400/cysteine 427, and cysteine 402/cysteine 416. Asparagine 141 carries N-linked (GlcNAc...) asparagine glycosylation. Asparagine 379 carries N-linked (GlcNAc...) asparagine glycosylation. The chain crosses the membrane as a helical span at residues 534-554 (SVLCLIEFGEIIIDFVWITII). The Cytoplasmic portion of the chain corresponds to 555 to 641 (KLVALAKSVR…IESDSEGDAI (87 aa)). Positions 597–624 (TPGPDVEAYPHEQNPPIPGTPPPNYDSL) are disordered. Over residues 609–620 (QNPPIPGTPPPN) the composition is skewed to pro residues. The PY motif; recruits WW domain-containing proteins and is thereby required for ubiquitination and inhibition of the channel by NEDD4 and NEDD4L motif lies at 617 to 621 (PPPNY). A phosphoserine mark is found at serine 634 and serine 636.

Belongs to the amiloride-sensitive sodium channel (TC 1.A.6) family. SCNN1B subfamily. As to quaternary structure, component of the heterotrimeric epithelial sodium channel (ENaC) composed of an alpha/SCNN1A, a beta/SCNN1B and a gamma/SCNN1G subunit. An additional delta/SCNN1D subunit can replace the alpha/SCNN1A subunit to form an alternative channel with specific properties. Interacts with WWP1 (via WW domains). Interacts with WWP2 (via WW domains); inhibits the channel. Interacts with the full-length immature form of PCSK9 (pro-PCSK9). Interacts (N-glycosylated) with BPIFA1; the interaction is direct and inhibits the proteolytic processing of SCNN1A and SCNN1G and the activation of ENaC. In terms of processing, ubiquitinated. Can be ubiquitinated at multiple sites and undergo monoubiquitination and polyubiquitination. Ubiquitination by NEDD4 or NEDD4L inhibits the ENaC channel through endocytosis, intracellular retention and degradation of its individual subunits. However, some studies could not confirm the ubiquitination of this subunit of the ENaC. Phosphorylated on serine and threonine residues. Aldosterone and insulin increase the basal level of phosphorylation. Post-translationally, N-glycosylated. N-glycosylation is required for interaction with BPIFA1.

Its subcellular location is the apical cell membrane. It localises to the cytoplasmic vesicle membrane. It carries out the reaction Na(+)(in) = Na(+)(out). With respect to regulation, originally identified and characterized by its inhibition by the diuretic drug amiloride. This is one of the three pore-forming subunits of the heterotrimeric epithelial sodium channel (ENaC), a critical regulator of sodium balance and fluid homeostasis. ENaC operates in epithelial tissues, where it mediates the electrodiffusion of sodium ions from extracellular fluid through the apical membrane of cells, with water following osmotically. It plays a key role in maintaining sodium homeostasis through electrogenic sodium reabsorption in the kidneys. Additionally, ENaC is essential for airway surface liquid homeostasis, which is crucial for proper mucus clearance. The polypeptide is Epithelial sodium channel subunit beta (Bos taurus (Bovine)).